Reading from the N-terminus, the 205-residue chain is Thiamine-phosphate synthase (205 aa).

4-amino-2-methyl-5-(diphosphooxymethyl)pyrimidine is bound by residues Gln-37 to Lys-41 and Asn-69. The Mg(2+) site is built by Asp-70 and Asp-89. Ser-108 is a 4-amino-2-methyl-5-(diphosphooxymethyl)pyrimidine binding site. 2-[(2R,5Z)-2-carboxy-4-methylthiazol-5(2H)-ylidene]ethyl phosphate is bound at residue Thr-134–Ser-136. Lys-137 contributes to the 4-amino-2-methyl-5-(diphosphooxymethyl)pyrimidine binding site. Residues Gly-165 and Ile-185–Ser-186 each bind 2-[(2R,5Z)-2-carboxy-4-methylthiazol-5(2H)-ylidene]ethyl phosphate.

The protein belongs to the thiamine-phosphate synthase family. Requires Mg(2+) as cofactor.

It catalyses the reaction 2-[(2R,5Z)-2-carboxy-4-methylthiazol-5(2H)-ylidene]ethyl phosphate + 4-amino-2-methyl-5-(diphosphooxymethyl)pyrimidine + 2 H(+) = thiamine phosphate + CO2 + diphosphate. The enzyme catalyses 2-(2-carboxy-4-methylthiazol-5-yl)ethyl phosphate + 4-amino-2-methyl-5-(diphosphooxymethyl)pyrimidine + 2 H(+) = thiamine phosphate + CO2 + diphosphate. The catalysed reaction is 4-methyl-5-(2-phosphooxyethyl)-thiazole + 4-amino-2-methyl-5-(diphosphooxymethyl)pyrimidine + H(+) = thiamine phosphate + diphosphate. Its pathway is cofactor biosynthesis; thiamine diphosphate biosynthesis; thiamine phosphate from 4-amino-2-methyl-5-diphosphomethylpyrimidine and 4-methyl-5-(2-phosphoethyl)-thiazole: step 1/1. Its function is as follows. Condenses 4-methyl-5-(beta-hydroxyethyl)thiazole monophosphate (THZ-P) and 2-methyl-4-amino-5-hydroxymethyl pyrimidine pyrophosphate (HMP-PP) to form thiamine monophosphate (TMP). The sequence is that of Thiamine-phosphate synthase from Clostridium botulinum (strain Kyoto / Type A2).